We begin with the raw amino-acid sequence, 941 residues long: Isoleucine--tRNA ligase (941 aa).

A 'HIGH' region motif is present at residues 59–69 (PYANGNIHIGH). Glutamate 562 is a binding site for L-isoleucyl-5'-AMP. The short motif at 603–607 (KMSKS) is the 'KMSKS' region element. Residue lysine 606 coordinates ATP. Zn(2+)-binding residues include cysteine 904, cysteine 907, cysteine 924, and cysteine 927.

The protein belongs to the class-I aminoacyl-tRNA synthetase family. IleS type 1 subfamily. As to quaternary structure, monomer. Zn(2+) is required as a cofactor.

It is found in the cytoplasm. The catalysed reaction is tRNA(Ile) + L-isoleucine + ATP = L-isoleucyl-tRNA(Ile) + AMP + diphosphate. Its function is as follows. Catalyzes the attachment of isoleucine to tRNA(Ile). As IleRS can inadvertently accommodate and process structurally similar amino acids such as valine, to avoid such errors it has two additional distinct tRNA(Ile)-dependent editing activities. One activity is designated as 'pretransfer' editing and involves the hydrolysis of activated Val-AMP. The other activity is designated 'posttransfer' editing and involves deacylation of mischarged Val-tRNA(Ile). This chain is Isoleucine--tRNA ligase, found in Haemophilus influenzae (strain 86-028NP).